A 290-amino-acid chain; its full sequence is N-acetylmannosamine kinase (290 aa).

Residues 6-13 (ALDIGGTK) and 132-139 (GVGGGIIL) contribute to the ATP site. Residues histidine 156, cysteine 166, cysteine 168, and cysteine 173 each contribute to the Zn(2+) site.

This sequence belongs to the ROK (NagC/XylR) family. NanK subfamily. Homodimer.

The enzyme catalyses an N-acyl-D-mannosamine + ATP = an N-acyl-D-mannosamine 6-phosphate + ADP + H(+). It participates in amino-sugar metabolism; N-acetylneuraminate degradation; D-fructose 6-phosphate from N-acetylneuraminate: step 2/5. Its function is as follows. Catalyzes the phosphorylation of N-acetylmannosamine (ManNAc) to ManNAc-6-P. The protein is N-acetylmannosamine kinase of Yersinia pseudotuberculosis serotype O:3 (strain YPIII).